The chain runs to 357 residues: Guanine nucleotide-binding protein alpha-1 subunit (357 aa).

A lipid anchor (N-myristoyl glycine) is attached at G2. The S-palmitoyl cysteine moiety is linked to residue C4. In terms of domain architecture, G-alpha spans 32 to 357 (NIIKLLLLGA…STKLKGCGLY (326 aa)). The segment at 35-48 (KLLLLGAGESGKST) is G1 motif. E43, S44, G45, K46, S47, T48, D151, L176, T182, G204, N270, K271, D273, and A329 together coordinate GTP. Residue S47 participates in Mg(2+) binding. Residues 174–182 (DILHTRVPT) form a G2 motif region. T182 contributes to the Mg(2+) binding site. The segment at 197–206 (FRVFDVGGQR) is G3 motif. Positions 266–273 (ILFLNKID) are G4 motif. The G5 motif stretch occupies residues 327–332 (TCATDT).

It belongs to the G-alpha family. In terms of assembly, g proteins are composed of 3 units; alpha, beta and gamma. The alpha chain contains the guanine nucleotide binding site. Requires Mg(2+) as cofactor.

In terms of biological role, guanine nucleotide-binding proteins (G proteins) are involved as modulators or transducers in various transmembrane signaling systems. The protein is Guanine nucleotide-binding protein alpha-1 subunit (gpa-1) of Caenorhabditis elegans.